The following is a 95-amino-acid chain: Corticostatin-3 (95 aa).

The first 19 residues, Met1–Ala19, serve as a signal peptide directing secretion. Residues Glu20–Gly62 constitute a propeptide that is removed on maturation. 3 disulfides stabilise this stretch: Cys65–Cys93, Cys67–Cys82, and Cys72–Cys92.

It belongs to the alpha-defensin family.

The protein localises to the secreted. In terms of biological role, this peptide has antibiotic, anti-fungi and antiviral activity. It also inhibits corticotropin (ACTH) stimulated corticosterone production. This chain is Corticostatin-3, found in Oryctolagus cuniculus (Rabbit).